A 1135-amino-acid polypeptide reads, in one-letter code: Envelopment polyprotein (1135 aa).

An N-terminal signal peptide occupies residues 1-18 (MIMWGLLLTMILIDFGAS). At 19 to 495 (LRNVYDMKIE…ALLTTFCFGW (477 aa)) the chain is on the lumenal side. 11 disulfide bridges follow: Cys-29–Cys-151, Cys-63–Cys-157, Cys-109–Cys-128, Cys-133–Cys-138, Cys-175–Cys-185, Cys-210–Cys-247, Cys-234–Cys-351, Cys-376–Cys-435, Cys-380–Cys-389, Cys-405–Cys-424, and Cys-452–Cys-475. The N-linked (GlcNAc...) asparagine; by host glycan is linked to Asn-134. Residues Asn-235 and Asn-347 are each glycosylated (N-linked (GlcNAc...) asparagine; by host). N-linked (GlcNAc...) asparagine; by host glycosylation is present at Asn-399. Residues 496-516 (ILILSITLAVLVVLKFFAAIL) traverse the membrane as a helical segment. The tract at residues 516 to 533 (LHNSSQENRFKIILRKIK) is binding to the ribonucleoprotein. Residues 517 to 627 (HNSSQENRFK…LNLFRYKSRC (111 aa)) are Cytoplasmic-facing. CCHC-type zinc fingers lie at residues 545–565 (CEVC…NLSC) and 570–591 (CPYC…YKVC). Binding to the ribonucleoprotein stretches follow at residues 588-605 (YKVC…KKTI), 592-603 (QATHRFRDDLKK), and 611-625 (SPGC…RYKS). An ITAM domain is found at 611–634 (SPGCYRTLNLFRYKSRCYIFTVWV). 2 positions are modified to phosphotyrosine: Tyr-615 and Tyr-628. The YxxL signature appears at 615 to 618 (YRTL). A helical transmembrane segment spans residues 628–648 (YIFTVWVTLLIIESIMWAASA). Residues 649–1105 (SETVLEPSWN…EWITGIFNGN (457 aa)) are Lumenal-facing. 8 disulfide bridges follow: Cys-735/Cys-770, Cys-739/Cys-777, Cys-751/Cys-885, Cys-765/Cys-896, Cys-780/Cys-904, Cys-806/Cys-815, Cys-823/Cys-832, and Cys-863/Cys-867. The interval 757–777 (FEYENNWGCNPADCPGIGTGC) is fusion loop. N-linked (GlcNAc...) asparagine; by host glycosylation occurs at Asn-928. Disulfide bonds link Cys-970–Cys-1000, Cys-993–Cys-1045, Cys-1010–Cys-1015, Cys-1046–Cys-1051, and Cys-1085–Cys-1089. Residues 1106–1126 (WIVIVVLVFFFILSLILLSLL) traverse the membrane as a helical segment. The tract at residues 1122–1135 (LLSLLCPIRKHKRS) is binding to the ribonucleoprotein. Residues 1127 to 1135 (CPIRKHKRS) lie on the Cytoplasmic side of the membrane.

Belongs to the hantavirus envelope glycoprotein family. As to quaternary structure, homodimer. Homotetramer; forms heterotetrameric Gn-Gc spikes in the pre-fusion conformation. Interacts (via C-terminus) with the nucleoprotein. Interacts with host TUFM; this interaction contributes to the virus-induced degradation of mitochondria by autophagy, which leads to degradation of host MAVS and inhibition of type I interferon (IFN) responses. Interacts with host MAP1LC3B; this interaction contributes to the virus-induced degradation of mitochondria by autophagy, which leads to degradation of host MAVS and inhibition of type I interferon (IFN) responses. In terms of assembly, homodimer. Homotetramer; forms heterotetrameric Gn-Gc spikes in the pre-fusion conformation. Homotrimer; forms homotrimer in the post-fusion conformation at acidic pH. Interacts (via C-terminus) with the nucleoprotein. Post-translationally, envelope polyprotein precursor is quickly cleaved in vivo just after synthesis, presumably by host signal peptidase.

Its subcellular location is the virion membrane. The protein resides in the host cell surface. It localises to the host Golgi apparatus membrane. The protein localises to the host endoplasmic reticulum membrane. It is found in the host mitochondrion. Functionally, forms homotetramers with glycoprotein C at the surface of the virion. Attaches the virion to host cell receptors including integrin ITGAV/ITGB3. This attachment induces virion internalization predominantly through clathrin-dependent endocytosis. Mediates the assembly and budding of infectious virus particles through its interaction with the nucleocapsid protein and the viral genome. May dysregulate normal immune and endothelial cell responses through an ITAM motif. Translocates to mitochondria, binds to host TUFM and recruits MAP1LC3B. These interactions induce mitochondrial autophagy and therefore destruction of host MAVS leading to inhibition of type I interferon (IFN) responses. Concomitant breakdown of glycoprotein N is apparently prevented by the nucleoprotein that may inhibit Gn-stimulated autophagosome-lysosome fusion. Interacts with the viral genomic RNA. Forms homotetramers with glycoprotein N at the surface of the virion. Attaches the virion to host cell receptors including integrin ITGAV/ITGB3. This attachment induces virion internalization predominantly through clathrin-dependent endocytosis. Class II fusion protein that promotes fusion of viral membrane with host endosomal membrane after endocytosis of the virion. This is Envelopment polyprotein (GP) from Dobrava-Belgrade orthohantavirus (DOBV).